The following is a 443-amino-acid chain: Serine/threonine-protein phosphatase 2A 55 kDa regulatory subunit B beta isoform (443 aa).

WD repeat units lie at residues 22 to 61 (TEAD…KNQP), 87 to 128 (EIEE…KRPE), 171 to 209 (AHTY…RSFN), 220 to 260 (ELTE…LCDR), 279 to 317 (EIIS…RPIE), 334 to 375 (ENDC…DVTL), and 410 to 443 (DFSK…DKVN).

Belongs to the phosphatase 2A regulatory subunit B family. In terms of assembly, PP2A consists of a common heterodimeric core enzyme, composed of a 36 kDa catalytic subunit (subunit C) and a 65 kDa constant regulatory subunit (PR65 or subunit A), that associates with a variety of regulatory subunits.

It localises to the cytoplasm. The protein resides in the cytoskeleton. Its subcellular location is the membrane. In terms of biological role, the B regulatory subunit might modulate substrate selectivity and catalytic activity, and might also direct the localization of the catalytic enzyme to a particular subcellular compartment. Negatively controls the initiation of oocyte maturation. This Xenopus tropicalis (Western clawed frog) protein is Serine/threonine-protein phosphatase 2A 55 kDa regulatory subunit B beta isoform (ppp2r2b).